An 82-amino-acid polypeptide reads, in one-letter code: Diptericin-A (82 aa).

2 disordered regions span residues 1 to 32 (DEKP…DGFG) and 45 to 69 (DNGG…GNSR). F82 carries the phenylalanine amide modification.

Belongs to the attacin/sarcotoxin-2 family.

It localises to the secreted. Antimicrobial peptide required to resist Gram-negative bacterial infections, regulated by Dredd. The polypeptide is Diptericin-A (Protophormia terraenovae (Northern blowfly)).